The following is a 314-amino-acid chain: Small ribosomal subunit biogenesis GTPase RsgA (314 aa).

The 161-residue stretch at 78–238 (SEIFREKLIA…IIDSPGFQEF (161 aa)) folds into the CP-type G domain. GTP contacts are provided by residues 127–130 (NKID) and 180–188 (GQSGVGKST). Residues cysteine 262, cysteine 267, histidine 269, and cysteine 275 each coordinate Zn(2+).

It belongs to the TRAFAC class YlqF/YawG GTPase family. RsgA subfamily. Monomer. Associates with 30S ribosomal subunit, binds 16S rRNA. The cofactor is Zn(2+).

Its subcellular location is the cytoplasm. Functionally, one of several proteins that assist in the late maturation steps of the functional core of the 30S ribosomal subunit. Helps release RbfA from mature subunits. May play a role in the assembly of ribosomal proteins into the subunit. Circularly permuted GTPase that catalyzes slow GTP hydrolysis, GTPase activity is stimulated by the 30S ribosomal subunit. This chain is Small ribosomal subunit biogenesis GTPase RsgA, found in Nitrosomonas europaea (strain ATCC 19718 / CIP 103999 / KCTC 2705 / NBRC 14298).